The sequence spans 1407 residues: DNA-directed RNA polymerase subunit beta' (1407 aa).

Zn(2+) contacts are provided by Cys-70, Cys-72, Cys-85, and Cys-88. Residues Asp-460, Asp-462, and Asp-464 each coordinate Mg(2+). Positions 814, 888, 895, and 898 each coordinate Zn(2+).

The protein belongs to the RNA polymerase beta' chain family. In terms of assembly, the RNAP catalytic core consists of 2 alpha, 1 beta, 1 beta' and 1 omega subunit. When a sigma factor is associated with the core the holoenzyme is formed, which can initiate transcription. The cofactor is Mg(2+). It depends on Zn(2+) as a cofactor.

The enzyme catalyses RNA(n) + a ribonucleoside 5'-triphosphate = RNA(n+1) + diphosphate. In terms of biological role, DNA-dependent RNA polymerase catalyzes the transcription of DNA into RNA using the four ribonucleoside triphosphates as substrates. This is DNA-directed RNA polymerase subunit beta' from Cronobacter sakazakii (strain ATCC BAA-894) (Enterobacter sakazakii).